We begin with the raw amino-acid sequence, 97 residues long: Carboxypeptidase inhibitor (97 aa).

The signal sequence occupies residues 1–22 (MAATLPVFAVVFFAMVLASSQA).

The protein resides in the secreted. Its function is as follows. Potent competitive inhibitor of metallo-carboxypeptidases CPA1, CPA2, CPB, CPN, and TAF1a. Also inhibits human CPA4. Accelerates fibrinolysis in vitro and may contribute to the maintenance of host blood liquidity during feeding. In Rhipicephalus bursa (Tick), this protein is Carboxypeptidase inhibitor.